The sequence spans 954 residues: ATPase 9, plasma membrane-type (954 aa).

Residues 1–66 are Cytoplasmic-facing; it reads MAGNKDSSWD…EKKENKVLKF (66 aa). The chain crosses the membrane as a helical span at residues 67–86; that stretch reads LGFMWNPLSWVMELAAIMAI. Over 87–98 the chain is Extracellular; it reads ALANGGGRPPDW. The chain crosses the membrane as a helical span at residues 99–119; the sequence is QDFVGITVLLIINSTISFIEE. Topologically, residues 120 to 248 are cytoplasmic; that stretch reads NNAGNAAAAL…GHFQKVLTAI (129 aa). The helical transmembrane segment at 249–269 threads the bilayer; the sequence is GNFCICSIAIGMLIEIVVMYP. At 270–278 the chain is on the extracellular side; sequence IQKRAYRDG. Residues 279-296 form a helical membrane-spanning segment; it reads IDNLLVLLIGGIPIAMPT. The Cytoplasmic segment spans residues 297–648; sequence VLSVTMAIGS…TSRAIFQRMK (352 aa). Residue Asp334 is the 4-aspartylphosphate intermediate of the active site. Mg(2+) contacts are provided by Asp593 and Asp597. A helical membrane pass occupies residues 649 to 670; it reads NYTIYAVSITIRIVMGFMLLAL. The Extracellular segment spans residues 671–675; that stretch reads IWKFD. Residues 676–698 form a helical membrane-spanning segment; the sequence is FSPFMVLIVAILNDGTIMTISKD. Residues 699–714 are Cytoplasmic-facing; it reads RVKPSPLPDSWKLKEI. A helical membrane pass occupies residues 715–735; sequence FATGVVLGTYLAVMTVVFFWA. At 736–756 the chain is on the extracellular side; it reads AESTDFFSAKFGVRSISGNPH. The helical transmembrane segment at 757–777 threads the bilayer; that stretch reads ELTAAVYLQVSIVSQALIFVT. Over 778-789 the chain is Cytoplasmic; sequence RSRSWSYVERPG. The helical transmembrane segment at 790–810 threads the bilayer; it reads FWLISAFFMAQLIATLIAVYA. Residues 811–818 lie on the Extracellular side of the membrane; the sequence is NWNFARIR. The chain crosses the membrane as a helical span at residues 819–839; sequence GIGWGWAGVIWLYSIVFYIPL. Residues 840–954 are Cytoplasmic-facing; that stretch reads DILKFIIRYS…IEAIQQHYTL (115 aa). Thr886 is subject to Phosphothreonine. Ser936 is subject to Phosphoserine. The segment at 952–954 is interaction with 14-3-3 proteins; it reads YTL. Thr953 carries the post-translational modification Phosphothreonine.

The protein belongs to the cation transport ATPase (P-type) (TC 3.A.3) family. Type IIIA subfamily. As to quaternary structure, binds to 14-3-3 proteins. The binding is induced by phosphorylation of Thr-953. Binding to 14-3-3 proteins activates the H(+)-ATPase. In terms of tissue distribution, anther specific. Expressed in guard cells.

It is found in the membrane. The catalysed reaction is ATP + H2O + H(+)(in) = ADP + phosphate + 2 H(+)(out). Its function is as follows. The plasma membrane H(+) ATPase of plants and fungi generates a proton gradient that drives the active transport of nutrients by H(+)-symport. The resulting external acidification and/or internal alkinization may mediate growth responses. This is ATPase 9, plasma membrane-type (AHA9) from Arabidopsis thaliana (Mouse-ear cress).